The primary structure comprises 445 residues: Tubulin beta-3 chain (445 aa).

Glutamine 11, glutamate 69, serine 138, glycine 142, threonine 143, glycine 144, asparagine 204, and asparagine 226 together coordinate GTP. Glutamate 69 is a Mg(2+) binding site. Positions 417–426 (DLVSEYQQYQ) are enriched in polar residues. The interval 417 to 445 (DLVSEYQQYQEASADDEADEFDEEEGDEE) is disordered. The segment covering 429 to 445 (SADDEADEFDEEEGDEE) has biased composition (acidic residues).

Belongs to the tubulin family. In terms of assembly, dimer of alpha and beta chains. A typical microtubule is a hollow water-filled tube with an outer diameter of 25 nm and an inner diameter of 15 nM. Alpha-beta heterodimers associate head-to-tail to form protofilaments running lengthwise along the microtubule wall with the beta-tubulin subunit facing the microtubule plus end conferring a structural polarity. Microtubules usually have 13 protofilaments but different protofilament numbers can be found in some organisms and specialized cells. Mg(2+) serves as cofactor.

The protein localises to the cytoplasm. Its subcellular location is the cytoskeleton. Its function is as follows. Tubulin is the major constituent of microtubules, a cylinder consisting of laterally associated linear protofilaments composed of alpha- and beta-tubulin heterodimers. Microtubules grow by the addition of GTP-tubulin dimers to the microtubule end, where a stabilizing cap forms. Below the cap, tubulin dimers are in GDP-bound state, owing to GTPase activity of alpha-tubulin. The protein is Tubulin beta-3 chain (TUBB3) of Oomycete-like sp. (strain MacKay2000).